We begin with the raw amino-acid sequence, 80 residues long: Cytochrome c oxidase subunit 7B, mitochondrial (80 aa).

The transit peptide at 1 to 24 (MFPLVKSALNRLQVRSIQQTMARQ) directs the protein to the mitochondrion. Over 25–32 (SHQKRTPD) the chain is Mitochondrial matrix. Residues 33–59 (FHDKYGNAVLASGATFCIVTWTYVATQ) form a helical membrane-spanning segment. The Mitochondrial intermembrane portion of the chain corresponds to 60 to 80 (VGIEWNLSPVGRVTPKEWRNQ).

Belongs to the cytochrome c oxidase VIIb family. As to quaternary structure, component of the cytochrome c oxidase (complex IV, CIV), a multisubunit enzyme composed of 14 subunits. The complex is composed of a catalytic core of 3 subunits MT-CO1, MT-CO2 and MT-CO3, encoded in the mitochondrial DNA, and 11 supernumerary subunits COX4I1 (or COX4I2), COX5A, COX5B, COX6A1 (or COX6A2), COX6B1 (or COX6B2), COX6C, COX7A2 (or COX7A1), COX7B, COX7C, COX8A and NDUFA4, which are encoded in the nuclear genome. The complex exists as a monomer or a dimer and forms supercomplexes (SCs) in the inner mitochondrial membrane with NADH-ubiquinone oxidoreductase (complex I, CI) and ubiquinol-cytochrome c oxidoreductase (cytochrome b-c1 complex, complex III, CIII), resulting in different assemblies (supercomplex SCI(1)III(2)IV(1) and megacomplex MCI(2)III(2)IV(2)).

Its subcellular location is the mitochondrion inner membrane. It participates in energy metabolism; oxidative phosphorylation. Its function is as follows. Component of the cytochrome c oxidase, the last enzyme in the mitochondrial electron transport chain which drives oxidative phosphorylation. The respiratory chain contains 3 multisubunit complexes succinate dehydrogenase (complex II, CII), ubiquinol-cytochrome c oxidoreductase (cytochrome b-c1 complex, complex III, CIII) and cytochrome c oxidase (complex IV, CIV), that cooperate to transfer electrons derived from NADH and succinate to molecular oxygen, creating an electrochemical gradient over the inner membrane that drives transmembrane transport and the ATP synthase. Cytochrome c oxidase is the component of the respiratory chain that catalyzes the reduction of oxygen to water. Electrons originating from reduced cytochrome c in the intermembrane space (IMS) are transferred via the dinuclear copper A center (CU(A)) of subunit 2 and heme A of subunit 1 to the active site in subunit 1, a binuclear center (BNC) formed by heme A3 and copper B (CU(B)). The BNC reduces molecular oxygen to 2 water molecules using 4 electrons from cytochrome c in the IMS and 4 protons from the mitochondrial matrix. Plays a role in proper central nervous system (CNS) development in vertebrates. In Homo sapiens (Human), this protein is Cytochrome c oxidase subunit 7B, mitochondrial (COX7B).